Reading from the N-terminus, the 249-residue chain is Methyl-coenzyme M reductase I subunit gamma (249 aa).

Arg120 contributes to the coenzyme M binding site.

Belongs to the methyl-coenzyme M reductase gamma subunit family. MCR is a hexamer of two alpha, two beta, and two gamma chains, forming a dimer of heterotrimers. The cofactor is coenzyme F430.

Its subcellular location is the cytoplasm. It catalyses the reaction coenzyme B + methyl-coenzyme M = methane + coenzyme M-coenzyme B heterodisulfide. The protein operates within one-carbon metabolism; methyl-coenzyme M reduction; methane from methyl-coenzyme M: step 1/1. Methyl-coenzyme M reductase activity is inhibited by 3-nitrooxypropanol (3-NOP) in vitro and in vivo, by oxidation of its active site Ni(I), which stops both growth and methanogenesis. Is also inhibited by the reaction product CoM-S-S-CoB. Component of the methyl-coenzyme M reductase (MCR) I that catalyzes the reductive cleavage of methyl-coenzyme M (CoM-S-CH3 or 2-(methylthio)ethanesulfonate) using coenzyme B (CoB or 7-mercaptoheptanoylthreonine phosphate) as reductant which results in the production of methane and the mixed heterodisulfide of CoB and CoM (CoM-S-S-CoB). This is the final step in methanogenesis. Neither N-6-mercaptohexanoylthreonine phosphate (H-S-HxoTP) nor N-8-mercaptooctanoylthreonine phosphate (H-SOcoTP) nor any other thiol compound such as CoA or CoM can substitute for CoB as the electron donor. In Methanothermobacter marburgensis (strain ATCC BAA-927 / DSM 2133 / JCM 14651 / NBRC 100331 / OCM 82 / Marburg) (Methanobacterium thermoautotrophicum), this protein is Methyl-coenzyme M reductase I subunit gamma (mcrG).